We begin with the raw amino-acid sequence, 178 residues long: Adenine phosphoribosyltransferase (178 aa).

Belongs to the purine/pyrimidine phosphoribosyltransferase family. As to quaternary structure, homodimer.

It localises to the cytoplasm. The catalysed reaction is AMP + diphosphate = 5-phospho-alpha-D-ribose 1-diphosphate + adenine. The protein operates within purine metabolism; AMP biosynthesis via salvage pathway; AMP from adenine: step 1/1. Catalyzes a salvage reaction resulting in the formation of AMP, that is energically less costly than de novo synthesis. The sequence is that of Adenine phosphoribosyltransferase from Cereibacter sphaeroides (strain ATCC 17023 / DSM 158 / JCM 6121 / CCUG 31486 / LMG 2827 / NBRC 12203 / NCIMB 8253 / ATH 2.4.1.) (Rhodobacter sphaeroides).